The primary structure comprises 85 residues: UPF0335 protein BARBAKC583_0130 (85 aa).

Belongs to the UPF0335 family.

The protein is UPF0335 protein BARBAKC583_0130 of Bartonella bacilliformis (strain ATCC 35685 / KC583 / Herrer 020/F12,63).